Here is a 530-residue protein sequence, read N- to C-terminus: Glucose-6-phosphate isomerase (530 aa).

The active-site Proton donor is the Glu-356. Active-site residues include His-387 and Lys-502.

The protein belongs to the GPI family.

The protein localises to the cytoplasm. It catalyses the reaction alpha-D-glucose 6-phosphate = beta-D-fructose 6-phosphate. The protein operates within carbohydrate biosynthesis; gluconeogenesis. Its pathway is carbohydrate degradation; glycolysis; D-glyceraldehyde 3-phosphate and glycerone phosphate from D-glucose: step 2/4. Catalyzes the reversible isomerization of glucose-6-phosphate to fructose-6-phosphate. In Borreliella afzelii (strain PKo) (Borrelia afzelii), this protein is Glucose-6-phosphate isomerase.